The following is a 206-amino-acid chain: Small ribosomal subunit protein uS4 (206 aa).

One can recognise an S4 RNA-binding domain in the interval 96 to 156 (CRLDNVVYRM…EKSKNQLRIA (61 aa)).

Belongs to the universal ribosomal protein uS4 family. In terms of assembly, part of the 30S ribosomal subunit. Contacts protein S5. The interaction surface between S4 and S5 is involved in control of translational fidelity.

Its function is as follows. One of the primary rRNA binding proteins, it binds directly to 16S rRNA where it nucleates assembly of the body of the 30S subunit. With S5 and S12 plays an important role in translational accuracy. The polypeptide is Small ribosomal subunit protein uS4 (Pseudomonas aeruginosa (strain LESB58)).